The following is a 33-amino-acid chain: Trypsin inhibitor 1 (33 aa).

Disulfide bonds link Cys-1–Cys-17, Cys-8–Cys-21, and Cys-16–Cys-32.

As to expression, expressed in leaves and fruit flesh (at protein level).

In terms of biological role, inhibits trypsin (IC(50)=471 nM). This chain is Trypsin inhibitor 1, found in Beta vulgaris subsp. vulgaris (Beet).